The sequence spans 556 residues: Formate--tetrahydrofolate ligase (556 aa).

65–72 contacts ATP; the sequence is TPAGEGKT.

It belongs to the formate--tetrahydrofolate ligase family.

It catalyses the reaction (6S)-5,6,7,8-tetrahydrofolate + formate + ATP = (6R)-10-formyltetrahydrofolate + ADP + phosphate. Its pathway is one-carbon metabolism; tetrahydrofolate interconversion. The sequence is that of Formate--tetrahydrofolate ligase from Carboxydothermus hydrogenoformans (strain ATCC BAA-161 / DSM 6008 / Z-2901).